We begin with the raw amino-acid sequence, 354 residues long: MEISASMVKELRESTGAGMMDCKKALQESNGDMQKAVDILREKGLGKAAKKADRLASEGLVSVVVSENNKTATITEINSETDFVAKNATFVDLVKNTTIHVQTNSINTVEELKESSINGVKFEEYFQSQIATIGENLVVRRFETIKAAKGGIVAGYIHSNSRVGVLIGAACDSEETAAKIHDFLRNLCMHAAAMKPQVISYKEFDADFVEKEYLALKGELEKENEELVRLKKPLHKIPEFASRAQLTDDIIAKATENLKAELKKQGKPEAIWDKILPGQIDRYIADNTQLDQRLTLLGQFYVMDDKKTVEQAIADEAKKVGGKVEIVSYVRFEVGEGLEKKSEDFAAEVAAQMA.

Residues 81-84 (TDFV) are involved in Mg(2+) ion dislocation from EF-Tu.

The protein belongs to the EF-Ts family.

The protein localises to the cytoplasm. Functionally, associates with the EF-Tu.GDP complex and induces the exchange of GDP to GTP. It remains bound to the aminoacyl-tRNA.EF-Tu.GTP complex up to the GTP hydrolysis stage on the ribosome. The sequence is that of Elongation factor Ts from Campylobacter fetus subsp. fetus (strain 82-40).